Consider the following 260-residue polypeptide: MRAPLWLRDLAGAWIFYSVLPAWPGLKPRFERIARFAPWIGLVLGGLQSFLWLVLIRADWPTSAVTLLVIGLGAWLSGGLHLDGLMDTADGLAAGRERCLQAMDDSCVGASGVQALLVVVLLQIASLLRLGSLAPLALLIAAFWGRCAPLWAMARFFYLREGQAGTASFHRRYRKGWQEALPACLVLLLALTVVPSLMIVGWPSQMVLMAGIGVGVLPAFLVPELLGRRLGGHSGDSYGASVVLVETITLLLLAVLLPAG.

8 helical membrane passes run 3–23 (APLWLRDLAGAWIFYSVLPAW), 36–56 (FAPWIGLVLGGLQSFLWLVLI), 60–80 (WPTSAVTLLVIGLGAWLSGGL), 108–128 (VGASGVQALLVVVLLQIASLL), 133–153 (LAPLALLIAAFWGRCAPLWAM), 180–200 (ALPACLVLLLALTVVPSLMIV), 206–226 (MVLMAGIGVGVLPAFLVPELL), and 239–259 (GASVVLVETITLLLLAVLLPA).

Belongs to the CobS family. Mg(2+) serves as cofactor.

Its subcellular location is the cell inner membrane. The catalysed reaction is alpha-ribazole + adenosylcob(III)inamide-GDP = adenosylcob(III)alamin + GMP + H(+). It catalyses the reaction alpha-ribazole 5'-phosphate + adenosylcob(III)inamide-GDP = adenosylcob(III)alamin 5'-phosphate + GMP + H(+). The protein operates within cofactor biosynthesis; adenosylcobalamin biosynthesis; adenosylcobalamin from cob(II)yrinate a,c-diamide: step 7/7. In terms of biological role, joins adenosylcobinamide-GDP and alpha-ribazole to generate adenosylcobalamin (Ado-cobalamin). Also synthesizes adenosylcobalamin 5'-phosphate from adenosylcobinamide-GDP and alpha-ribazole 5'-phosphate. The protein is Adenosylcobinamide-GDP ribazoletransferase of Prochlorococcus marinus (strain MIT 9313).